The sequence spans 149 residues: Mediator of RNA polymerase II transcription subunit 9 (149 aa).

The disordered stretch occupies residues Thr18–Glu64. Residues Pro25–Tyr45 are compositionally biased toward basic and acidic residues. Residues Leu46–Gly63 are compositionally biased toward polar residues. Short sequence motifs (nuclear localization signal) lie at residues Arg77–Lys99 and Lys136–Arg149.

This sequence belongs to the Mediator complex subunit 9 family. In terms of assembly, component of the Mediator complex, which is composed of at least 21 subunits that form three structurally distinct submodules. The Mediator head module contains MED6, MED8, MED11, SRB4/MED17, SRB5/MED18, ROX3/MED19, SRB2/MED20 and SRB6/MED22, the middle module contains MED1, MED4, NUT1/MED5, MED7, CSE2/MED9, NUT2/MED10, SRB7/MED21 and SOH1/MED31, and the tail module contains MED2, PGD1/MED3, RGR1/MED14, GAL11/MED15 and SIN4/MED16. The head and the middle modules interact directly with RNA polymerase II, whereas the elongated tail module interacts with gene-specific regulatory proteins. CSE2/MED9 interacts directly with MED4.

The protein resides in the nucleus. In terms of biological role, component of the Mediator complex, a coactivator involved in the regulated transcription of nearly all RNA polymerase II-dependent genes. Mediator functions as a bridge to convey information from gene-specific regulatory proteins to the basal RNA polymerase II transcription machinery. The Mediator complex, having a compact conformation in its free form, is recruited to promoters by direct interactions with regulatory proteins and serves for the assembly of a functional preinitiation complex with RNA polymerase II and the general transcription factors. The Mediator complex unfolds to an extended conformation and partially surrounds RNA polymerase II, specifically interacting with the unphosphorylated form of the C-terminal domain (CTD) of RNA polymerase II. The Mediator complex dissociates from the RNA polymerase II holoenzyme and stays at the promoter when transcriptional elongation begins. The protein is Mediator of RNA polymerase II transcription subunit 9 (CSE2) of Saccharomyces cerevisiae (strain ATCC 204508 / S288c) (Baker's yeast).